A 540-amino-acid polypeptide reads, in one-letter code: MAKDIKFSADARSAMVRGVDILADTVFVTLGPKGRNVVLEKAFGSPLITNDGVTIAKEIELEDHFENMGAKLVSEVASKTNDIAGDGTTTATVLPQAIVREGLKNVTAGANPIGIRRGIETAVSAAVEELKEIAQPVSGKEAIAQVAAVSSRSEKVGEYISEAMERVGNDGVITIEESRGMETELEVVEGMQFDRGYLSQYMVTDNEKMVSELENPYILITDKKISNIQEILPLLEEVLKTNRPLLIIADDVDGEALPTLVLNKIRGTFNVVAVKAPGFGDRRKAMLEDIAILTGGTVVTEDLGLDLKDATMQVLGQSAKVTVDKDSTVIVEGAGDSSAIANRVAIIKSQMEATTSDFDREKLQERLAKLAGGVAVIKVGAATETELKEMKLRIEDALNATRAAVEEGIVSGGGTALVNVIEKVAALKLNGDEETGRNIVLRALEEPVRQIAYNAGYKGSVIIARLKQSEIGTGFNAANGEWVDMVTTGIIDPVKVTRSALQNAASVASLILTTEAVVANKPEPEAPTAPAMDPSMMGGF.

ATP is bound by residues 29–32 (TLGP), 86–90 (DGTTT), Gly413, 476–478 (NAA), and Asp492.

This sequence belongs to the chaperonin (HSP60) family. As to quaternary structure, forms a cylinder of 14 subunits composed of two heptameric rings stacked back-to-back. Interacts with the co-chaperonin GroES.

It localises to the cytoplasm. It catalyses the reaction ATP + H2O + a folded polypeptide = ADP + phosphate + an unfolded polypeptide.. In terms of biological role, together with its co-chaperonin GroES, plays an essential role in assisting protein folding. The GroEL-GroES system forms a nano-cage that allows encapsulation of the non-native substrate proteins and provides a physical environment optimized to promote and accelerate protein folding. The sequence is that of Chaperonin GroEL from Streptococcus agalactiae.